Consider the following 239-residue polypeptide: tRNA (guanine-N(1)-)-methyltransferase (239 aa).

S-adenosyl-L-methionine contacts are provided by residues Gly-110 and 130–135; that span reads VGDYVL.

It belongs to the RNA methyltransferase TrmD family. In terms of assembly, homodimer.

The protein localises to the cytoplasm. It carries out the reaction guanosine(37) in tRNA + S-adenosyl-L-methionine = N(1)-methylguanosine(37) in tRNA + S-adenosyl-L-homocysteine + H(+). Specifically methylates guanosine-37 in various tRNAs. The polypeptide is tRNA (guanine-N(1)-)-methyltransferase (Borrelia turicatae (strain 91E135)).